Consider the following 128-residue polypeptide: MWSTRSPNSTAWPLSLEPDPGMASASTTMHTTTIAEPDPGMSGWPDGRMETSTPTIMDIVVIAGVIAAVAIVLVSLLFVMLRYMYRHKGTYHTNEAKGTEFAESADAALQGDPALQDAGDSSRKEYFI.

Positions 1 to 12 are enriched in polar residues; it reads MWSTRSPNSTAW. The disordered stretch occupies residues 1–48; the sequence is MWSTRSPNSTAWPLSLEPDPGMASASTTMHTTTIAEPDPGMSGWPDGR. The Extracellular segment spans residues 1–57; it reads MWSTRSPNSTAWPLSLEPDPGMASASTTMHTTTIAEPDPGMSGWPDGRMETSTPTIM. S3 carries an O-linked (GalNAc...) serine glycan. O-linked (GalNAc...) threonine glycosylation is present at T4. The O-linked (GalNAc...) serine glycan is linked to S6. A glycan (N-linked (GlcNAc...) asparagine) is linked at N8. O-linked (GalNAc...) serine glycosylation is present at S9. O-linked (GalNAc...) threonine glycosylation occurs at T10. Residues S15, S24, and S26 are each glycosylated (O-linked (GalNAc...) serine). Low complexity predominate over residues 22-33; sequence MASASTTMHTTT. 5 O-linked (GalNAc...) threonine glycosylation sites follow: T27, T28, T31, T32, and T33. O-linked (GalNAc...) serine glycosylation is present at S42. Residues 58–81 traverse the membrane as a helical; Signal-anchor for type III membrane protein segment; it reads DIVVIAGVIAAVAIVLVSLLFVML. The Cytoplasmic portion of the chain corresponds to 82-128; that stretch reads RYMYRHKGTYHTNEAKGTEFAESADAALQGDPALQDAGDSSRKEYFI. S104 and S122 each carry phosphoserine. The disordered stretch occupies residues 108–128; that stretch reads ALQGDPALQDAGDSSRKEYFI.

It belongs to the glycophorin-C family. O-glycosylated with core 1 or possibly core 8 glycans. As to expression, glycophorin-C is expressed in erythrocytes. Glycophorin-D and IsoGPC are ubiquitously expressed.

The protein resides in the cell membrane. Functionally, this protein is a minor sialoglycoprotein in human erythrocyte membranes. The blood group Gerbich antigens and receptors for Plasmodium falciparum merozoites are most likely located within the extracellular domain. Glycophorin-C plays an important role in regulating the stability of red cells. The sequence is that of Glycophorin-C (GYPC) from Homo sapiens (Human).